The following is a 352-amino-acid chain: MEYRKIKDEDDHDVASDIESVKGKSHTVASSNIAMATLGVGSSERINWKRKGVVTCALTILTSSQAILIVWSKRAGKYEYSVTTANFLVGTLKCALSLLALTRIWKNEGVTDDNRLSTTFDEVKVFPIPAALYLFKNLLQYYIFAYVDAPGYQILKNLNIISTGVLYRIILKRKLSEIQWAGFILLCCGCTTAQLNSNSDRVLQTSLPGWTMAIVMALLSGFAGVYTEAIIKKRPSRNINVQNFWLYVFGMAFNAVAIVIQDFDAVANKGFFHGYSFITLLMILNHALSGIAVSMVMKYADNIVKVYSTSVAMLLTAVVSVFLFNFHLSLAFFLGSTVVSVSVYLHSAGKLR.

Over 1 to 51 (MEYRKIKDEDDHDVASDIESVKGKSHTVASSNIAMATLGVGSSERINWKRK) the chain is Cytoplasmic. Residues 52–72 (GVVTCALTILTSSQAILIVWS) traverse the membrane as a helical segment. Topologically, residues 73 to 81 (KRAGKYEYS) are lumenal. A helical transmembrane segment spans residues 82–102 (VTTANFLVGTLKCALSLLALT). Topologically, residues 103–124 (RIWKNEGVTDDNRLSTTFDEVK) are cytoplasmic. The helical transmembrane segment at 125–145 (VFPIPAALYLFKNLLQYYIFA) threads the bilayer. Residues 146-174 (YVDAPGYQILKNLNIISTGVLYRIILKRK) lie on the Lumenal side of the membrane. The helical transmembrane segment at 175-195 (LSEIQWAGFILLCCGCTTAQL) threads the bilayer. At 196–210 (NSNSDRVLQTSLPGW) the chain is on the cytoplasmic side. Residues 211–231 (TMAIVMALLSGFAGVYTEAII) traverse the membrane as a helical segment. Residues 232–238 (KKRPSRN) are Lumenal-facing. Residues 239–259 (INVQNFWLYVFGMAFNAVAIV) traverse the membrane as a helical segment. Residues 260–276 (IQDFDAVANKGFFHGYS) are Cytoplasmic-facing. A helical membrane pass occupies residues 277–297 (FITLLMILNHALSGIAVSMVM). At 298-313 (KYADNIVKVYSTSVAM) the chain is on the lumenal side. Residues 314-334 (LLTAVVSVFLFNFHLSLAFFL) form a helical membrane-spanning segment. Over 335 to 352 (GSTVVSVSVYLHSAGKLR) the chain is Cytoplasmic.

The protein belongs to the nucleotide-sugar transporter family. CMP-Sialate:CMP antiporter (TC 2.A.7.12) subfamily.

The protein resides in the golgi apparatus membrane. In terms of biological role, sugar transporter involved in the transport of CMP-sialic acid from the cytoplasm into the Golgi. Essential protein. The chain is CMP-sialic acid transporter 4 from Arabidopsis thaliana (Mouse-ear cress).